Consider the following 38-residue polypeptide: Cytochrome b6-f complex subunit 5 (38 aa).

The chain crosses the membrane as a helical span at residues 5–25; that stretch reads LLLGIVLGLIPVTLAGLFVAA.

It belongs to the PetG family. In terms of assembly, the 4 large subunits of the cytochrome b6-f complex are cytochrome b6, subunit IV (17 kDa polypeptide, PetD), cytochrome f and the Rieske protein, while the 4 small subunits are PetG, PetL, PetM and PetN. The complex functions as a dimer.

Its subcellular location is the cellular thylakoid membrane. In terms of biological role, component of the cytochrome b6-f complex, which mediates electron transfer between photosystem II (PSII) and photosystem I (PSI), cyclic electron flow around PSI, and state transitions. PetG is required for either the stability or assembly of the cytochrome b6-f complex. This Synechocystis sp. (strain ATCC 27184 / PCC 6803 / Kazusa) protein is Cytochrome b6-f complex subunit 5.